Here is a 579-residue protein sequence, read N- to C-terminus: MTPSLVFLIVVIVVVEGQGWRPWDRFNHPGNFGNWGGNNWGTRQRNQEPHDIPPPVPPPGFRGNNDRFGGNIIKVVEIIDLGKSKNRGDILSDFKDVHKKHRHLGRKEWKGKVKQFCHRFPGHPNCRRGKVPDQKELEEMIGQFSKGGIGRFLKRVPKIYIEDPLARVDPKLKGFLENAGRGFGHVSSEHVNKLRDICKRRKCREQPESAKKTRELFTQKLADFETKIAGKDKTDSVQLRFDRTLQIKEALLEKGNLTADIVPVDNGVYDLDTMLTEEQANILLNELNKAGVGDDEIPLPDADTDDEDDDDSTNSASGAAPGSSRLKKSALYFEGNLIKKWDPSSPIRYVLDSSLEDLDKNDVRAAIYEIEKNTCIRFKELSSPPTGSHIVYYKVDSPTFCGLSYVGRADPANPVYLSFGCDNNKGVAIHETMHALGVAHQHLRNDRDQFITINWSNIDPQQYDAFVVVDSKLYTSYGVKYAYDSIMHYNGYTAAQNIAIPTMNPKTNSAVNLKVLGQRQKMGTTDIELLKKMYCQPGCDDKNVYCGAWALKDLCKNPGHDQYMAANCKKSCGLCAIGK.

A signal peptide spans 1–17 (MTPSLVFLIVVIVVVEG). Positions 18–328 (QGWRPWDRFN…AAPGSSRLKK (311 aa)) are excised as a propeptide. Positions 35-58 (WGGNNWGTRQRNQEPHDIPPPVPP) are disordered. The N-linked (GlcNAc...) asparagine glycan is linked to Asn256. A compositionally biased stretch (acidic residues) spans 293–312 (GDDEIPLPDADTDDEDDDDS). A disordered region spans residues 293 to 323 (GDDEIPLPDADTDDEDDDDSTNSASGAAPGS). A Peptidase M12A domain is found at 329 to 536 (SALYFEGNLI…IELLKKMYCQ (208 aa)). 5 disulfide bridges follow: Cys375–Cys535, Cys401–Cys421, Cys539–Cys575, Cys546–Cys568, and Cys555–Cys572. His430 contributes to the Zn(2+) binding site. Residue Glu431 is part of the active site. Residues His434 and His440 each coordinate Zn(2+). Asn454 carries N-linked (GlcNAc...) asparagine glycosylation. One can recognise a ShKT domain in the interval 539 to 575 (CDDKNVYCGAWALKDLCKNPGHDQYMAANCKKSCGLC).

The cofactor is Zn(2+). Expressed in the anterior part of the intestine, CEP neurons and to a lesser extent in hypodermis.

Its subcellular location is the secreted. Functionally, metalloprotease. The sequence is that of Zinc metalloproteinase nas-11 (nas-11) from Caenorhabditis elegans.